The following is a 170-amino-acid chain: Shikimate kinase (170 aa).

11–16 (LSGKST) lines the ATP pocket. Ser15 is a binding site for Mg(2+). Residues Asp33, Arg57, and Gly79 each coordinate substrate. An ATP-binding site is contributed by Arg119. Residue Arg137 participates in substrate binding.

The protein belongs to the shikimate kinase family. Monomer. It depends on Mg(2+) as a cofactor.

Its subcellular location is the cytoplasm. It catalyses the reaction shikimate + ATP = 3-phosphoshikimate + ADP + H(+). The protein operates within metabolic intermediate biosynthesis; chorismate biosynthesis; chorismate from D-erythrose 4-phosphate and phosphoenolpyruvate: step 5/7. Catalyzes the specific phosphorylation of the 3-hydroxyl group of shikimic acid using ATP as a cosubstrate. The polypeptide is Shikimate kinase (Clostridium botulinum (strain 657 / Type Ba4)).